The following is a 431-amino-acid chain: MKLALIDGEHYPDVNRWAIEKIKPCCAVFVGGTEKIGSIRDIEKALNIKVYHSPNIFEALSKAISENNITEVIDLSDEPVLTPNLRFRIASYLLKLGITYKGADFEFRAKEWKKIDIPSISIIGTGKRVGKTAIGGFVGRTLKELYKVVIVTMGRGGPEKPEVIRGDLMEITPEFLLKVSEEGKHAASDHFEDALTAGVITVGCRRCGGGLAGFSFFDIIDEGIEIAKSLNPDIIVFEGSGPTFPNVLADGFITITSAIHGTEKIEQYFGPLRIGLADIVVVTMADSVSEEKLKRITQAIREINPEADIHLTRFVPRLIGEVDGKAIIATTNPQSAKKFSEELEKMGIEVVYYTGNLAKRNILKDELAKVNYDDTAIVELKAGAVDVVIRHAFSRGKRVVFLDNEPKNIDGKDLKEAVINLARRIVNDKGN.

Belongs to the cyclic 2,3-diphosphoglycerate synthetase family.

The protein localises to the cytoplasm. The catalysed reaction is (2R)-2,3-bisphosphoglycerate + ATP + H(+) = cyclic (2R)-2,3-bisphosphoglycerate + ADP + phosphate. In terms of biological role, catalyzes the formation of cyclic 2,3-diphosphoglycerate (cDPG) by formation of an intramolecular phosphoanhydride bond at the expense of ATP. The polypeptide is Cyclic 2,3-diphosphoglycerate synthetase (Pyrococcus furiosus (strain ATCC 43587 / DSM 3638 / JCM 8422 / Vc1)).